A 340-amino-acid chain; its full sequence is Dihydroorotase (340 aa).

Positions 14 and 16 each coordinate Zn(2+). Residues 16 to 18 and N42 contribute to the substrate site; that span reads HLR. Zn(2+)-binding residues include K100, H137, and H175. K100 carries the post-translational modification N6-carboxylysine. H137 contacts substrate. Residue L220 participates in substrate binding. D248 is a binding site for Zn(2+). The active site involves D248. Positions 252 and 264 each coordinate substrate.

This sequence belongs to the metallo-dependent hydrolases superfamily. DHOase family. Class II DHOase subfamily. As to quaternary structure, homodimer. Zn(2+) is required as a cofactor.

The enzyme catalyses (S)-dihydroorotate + H2O = N-carbamoyl-L-aspartate + H(+). The protein operates within pyrimidine metabolism; UMP biosynthesis via de novo pathway; (S)-dihydroorotate from bicarbonate: step 3/3. In terms of biological role, catalyzes the reversible cyclization of carbamoyl aspartate to dihydroorotate. The protein is Dihydroorotase of Sphingopyxis alaskensis (strain DSM 13593 / LMG 18877 / RB2256) (Sphingomonas alaskensis).